Here is a 349-residue protein sequence, read N- to C-terminus: Methylthioribose-1-phosphate isomerase (349 aa).

Substrate-binding positions include R51 to A53, R94, and Q199. D240 acts as the Proton donor in catalysis. N250 to K251 provides a ligand contact to substrate.

It belongs to the eIF-2B alpha/beta/delta subunits family. MtnA subfamily. Homodimer.

It catalyses the reaction 5-(methylsulfanyl)-alpha-D-ribose 1-phosphate = 5-(methylsulfanyl)-D-ribulose 1-phosphate. It functions in the pathway amino-acid biosynthesis; L-methionine biosynthesis via salvage pathway; L-methionine from S-methyl-5-thio-alpha-D-ribose 1-phosphate: step 1/6. Functionally, catalyzes the interconversion of methylthioribose-1-phosphate (MTR-1-P) into methylthioribulose-1-phosphate (MTRu-1-P). The polypeptide is Methylthioribose-1-phosphate isomerase (Bacillus cytotoxicus (strain DSM 22905 / CIP 110041 / 391-98 / NVH 391-98)).